Consider the following 142-residue polypeptide: Hemoglobin subunit alpha-A (142 aa).

The Globin domain occupies 2–142 (VLSAADKNNV…VGTVLTAKYR (141 aa)). His59 contacts O2. Heme b is bound at residue His88.

It belongs to the globin family. Heterotetramer of two alpha chains and two beta chains. Red blood cells.

Its function is as follows. Involved in oxygen transport from the lung to the various peripheral tissues. The chain is Hemoglobin subunit alpha-A (HBAA) from Gallus gallus (Chicken).